The following is a 304-amino-acid chain: DCN1-like protein 3 (304 aa).

Disordered regions lie at residues 1–87 (MGQC…EESS) and 284–304 (EVEG…EEQT). The N-myristoyl glycine moiety is linked to residue Gly2. The DCUN1 domain occupies 86–278 (SSLQRLEELF…LFDTFVEWEM (193 aa)).

As to quaternary structure, part of a complex containing DCUN1D3, CUL3 and RBX1. Interacts (via the DCUN1 domain) with the unneddylated cullins: interacts with CUL1, CUL2, CUL3, CUL4A, CUL4B and CUL5; these interactions promote the cullin neddylation and the identity of the cullin dictates the affinity of the interaction. Interacts preferentially with CUL3; this interaction triggers the relocalization of CUL3 to the cell membrane where CUL3 is neddylated. Interacts (via DCUN1 domain) with RBX1. May also interact with regulators or subunits of cullin-RING ligases such as RNF7, ELOB and DDB1; these interactions are bridged by cullins. Interacts (via DCUN1 domain) with CAND1; this interaction is bridged by cullins and strongly inhibits cullin neddylation. These CAND-cullin-DCNL complexes can only be neddylated in the presence of a substrate adapter. Interacts (via DCUN1 domain) with the N-terminally acetylated form of UBE2M and UBE2F. Highest levels of expression are in the testis. Very low levels of expression in the heart, brain, skeletal muscle, kidney, liver, spleen, lung and ovary.

The protein localises to the cell membrane. The protein resides in the cytoplasm. Its subcellular location is the nucleus. It localises to the perinuclear region. In terms of biological role, contributes to the neddylation of all cullins by transferring NEDD8 from N-terminally acetylated NEDD8-conjugating E2s enzyme to different cullin C-terminal domain-RBX complexes and may play a role in the cell cycle progression by regulating the SCF ubiquitin E3 ligase complex, after UV damage. At the cell membrane, can promote and as well inhibit cullins neddylation. The chain is DCN1-like protein 3 from Mus musculus (Mouse).